A 362-amino-acid polypeptide reads, in one-letter code: 3-dehydroquinate synthase (362 aa).

NAD(+) is bound by residues 74-79 (DGEEHK), 108-112 (GVTGD), 132-133 (TT), lysine 145, and lysine 154. 3 residues coordinate Zn(2+): glutamate 187, histidine 250, and histidine 267.

Belongs to the sugar phosphate cyclases superfamily. Dehydroquinate synthase family. Requires Co(2+) as cofactor. Zn(2+) is required as a cofactor. NAD(+) serves as cofactor.

The protein resides in the cytoplasm. The catalysed reaction is 7-phospho-2-dehydro-3-deoxy-D-arabino-heptonate = 3-dehydroquinate + phosphate. The protein operates within metabolic intermediate biosynthesis; chorismate biosynthesis; chorismate from D-erythrose 4-phosphate and phosphoenolpyruvate: step 2/7. In terms of biological role, catalyzes the conversion of 3-deoxy-D-arabino-heptulosonate 7-phosphate (DAHP) to dehydroquinate (DHQ). The polypeptide is 3-dehydroquinate synthase (Syntrophotalea carbinolica (strain DSM 2380 / NBRC 103641 / GraBd1) (Pelobacter carbinolicus)).